Here is a 383-residue protein sequence, read N- to C-terminus: Putative F-box protein At1g77650 (383 aa).

The F-box domain maps to Met-1–Leu-47.

This is Putative F-box protein At1g77650 from Arabidopsis thaliana (Mouse-ear cress).